We begin with the raw amino-acid sequence, 430 residues long: Trigger factor (430 aa).

The region spanning 157 to 242 is the PPIase FKBP-type domain; the sequence is GDLVALETWS…AVEVSEPVLP (86 aa).

It belongs to the FKBP-type PPIase family. Tig subfamily.

The protein resides in the cytoplasm. The enzyme catalyses [protein]-peptidylproline (omega=180) = [protein]-peptidylproline (omega=0). In terms of biological role, involved in protein export. Acts as a chaperone by maintaining the newly synthesized protein in an open conformation. Functions as a peptidyl-prolyl cis-trans isomerase. This Xanthomonas euvesicatoria pv. vesicatoria (strain 85-10) (Xanthomonas campestris pv. vesicatoria) protein is Trigger factor.